The sequence spans 451 residues: Vitamin D3 receptor (451 aa).

The segment at residues P44–M112 is a DNA-binding region (nuclear receptor). Zn(2+)-binding residues include C47, C50, C64, C67, C83, C89, C99, and C102. 2 consecutive NR C4-type zinc fingers follow at residues C47 to C67 and C83 to C107. Hinge stretches follow at residues M113–E149 and D120–E149. The region spanning E150–G447 is the NR LBD domain. S261 serves as a coordination point for calcitriol. Residues K270–K288 are interaction with coactivator LXXLL motif. R298, S302, H329, and H421 together coordinate calcitriol. A 9aaTAD motif is present at residues P440–N448.

Belongs to the nuclear hormone receptor family. NR1 subfamily. In terms of assembly, homodimer in the absence of bound vitamin D3. Heterodimer with RXRA after vitamin D3 binding. As to expression, expressed in kidney and intestine.

Its subcellular location is the nucleus. It is found in the cytoplasm. Functionally, nuclear receptor for calcitriol, the active form of vitamin D3 which mediates the action of this vitamin on cells. Enters the nucleus upon vitamin D3 binding where it forms heterodimers with the retinoid X receptor/RXR. The VDR-RXR heterodimers bind to specific response elements on DNA and activate the transcription of vitamin D3-responsive target genes. Plays a central role in calcium homeostasis. Also functions as a receptor for the secondary bile acid lithocholic acid (LCA) and its metabolites. The chain is Vitamin D3 receptor (VDR) from Gallus gallus (Chicken).